The following is a 182-amino-acid chain: ATP synthase subunit delta, mitochondrial (182 aa).

The transit peptide at 1–17 directs the protein to the mitochondrion; it reads MFRTFGRRLVSCTLPLL.

Belongs to the ATPase epsilon chain family. As to quaternary structure, F-type ATPases have 2 components, F(1) - the catalytic core - and F(o) - the membrane proton channel. F(1) has five subunits: alpha(3), beta(3), gamma(1), delta(1), epsilon(1), plus the additional subunit P18 (Tb427.05.1710) that is not present in F(1)F(o) ATP synthase from metazoa. Subunit P18 (Tb927.5.1710) interacts with the alpha subunit with a 1:1 stoichiometry; the interaction is direct. Subunit gamma is part of the central stalk. F(o) has three main subunits: a, b and c. The trypanosomal ATPase complex contains additional subunits that are not present in the F(1)F(o) ATP synthase from metazoa.

The protein localises to the mitochondrion. The protein resides in the mitochondrion inner membrane. In terms of biological role, mitochondrial membrane ATP synthase (F(1)F(o) ATP synthase) produces ATP from ADP in the presence of a proton gradient across the membrane which is generated by electron transport complexes of the respiratory chain. F-type ATPases consist of two structural domains, F(1) - containing the extramembraneous catalytic core, and F(o) - containing the membrane proton channel, linked together by a central stalk and a peripheral stalk. During catalysis, ATP synthesis in the catalytic domain of F(1) is coupled via a rotary mechanism of the central stalk subunits to proton translocation. Subunits alpha and beta form the catalytic core in F(1). Rotation of the central stalk against the surrounding alpha(3)beta(3) subunits leads to hydrolysis of ATP in three separate catalytic sites on the beta subunits. Contrary to the procyclic, insect form that requires F(1)F(o) ATP synthase for ATP synthesis, the bloodstream form relies on ATP hydrolysis by F(1)F(o) ATP synthase to maintain its mitochondrial membrane potential. In Trypanosoma brucei brucei, this protein is ATP synthase subunit delta, mitochondrial.